An 85-amino-acid polypeptide reads, in one-letter code: UPF0335 protein BQ12070 (85 aa).

The protein belongs to the UPF0335 family.

This chain is UPF0335 protein BQ12070, found in Bartonella quintana (strain Toulouse) (Rochalimaea quintana).